The primary structure comprises 71 residues: KRCYRTPDLKSQTCPPGEDLCYTKKWCADWCTSRGKVIELGCVATCPKVKPYEQITCCSTDNCNPHPKMKP.

5 disulfide bridges follow: Cys-3–Cys-21, Cys-14–Cys-42, Cys-27–Cys-31, Cys-46–Cys-57, and Cys-58–Cys-63.

It belongs to the three-finger toxin family. Long-chain subfamily. Type II alpha-neurotoxin sub-subfamily. Expressed by the venom gland.

Its subcellular location is the secreted. Binds with high affinity to muscular (alpha-1/CHRNA1) and neuronal (alpha-7/CHRNA7) nicotinic acetylcholine receptor (nAChR) and inhibits acetylcholine from binding to the receptor, thereby impairing neuromuscular and neuronal transmission. The polypeptide is Long neurotoxin 1 (Naja melanoleuca (Forest cobra)).